The following is a 131-amino-acid chain: Small ribosomal subunit protein uS8 (131 aa).

The protein belongs to the universal ribosomal protein uS8 family. In terms of assembly, part of the 30S ribosomal subunit. Contacts proteins S5 and S12.

One of the primary rRNA binding proteins, it binds directly to 16S rRNA central domain where it helps coordinate assembly of the platform of the 30S subunit. The polypeptide is Small ribosomal subunit protein uS8 (Hamiltonella defensa subsp. Acyrthosiphon pisum (strain 5AT)).